Here is a 372-residue protein sequence, read N- to C-terminus: Cytochrome b (372 aa).

4 consecutive transmembrane segments (helical) span residues 25–45 (FGSMLLACLMLQIMTGFFLAI), 69–90 (WIMQNLHTISASLFFICIYTHI), 105–125 (WLSGTALLVTLMATAFFGYVL), and 170–190 (FFALHFILPFIIISLSSVHII). Residues His-75 and His-89 each coordinate heme b. Heme b-binding residues include His-174 and His-188. His-193 is a binding site for a ubiquinone. Transmembrane regions (helical) follow at residues 218–238 (YKDMLMITSMITLLLLILSFS), 280–300 (LGGTLALLLSVMILTTTPFTH), 312–332 (LSQILFWTLIATFITITWTAS), and 339–358 (FITISQTTSIFYFSFFILTP).

The protein belongs to the cytochrome b family. The cytochrome bc1 complex contains 3 respiratory subunits (MT-CYB, CYC1 and UQCRFS1), 2 core proteins (UQCRC1 and UQCRC2) and probably 6 low-molecular weight proteins. The cofactor is heme b.

The protein localises to the mitochondrion inner membrane. Its function is as follows. Component of the ubiquinol-cytochrome c reductase complex (complex III or cytochrome b-c1 complex) that is part of the mitochondrial respiratory chain. The b-c1 complex mediates electron transfer from ubiquinol to cytochrome c. Contributes to the generation of a proton gradient across the mitochondrial membrane that is then used for ATP synthesis. This is Cytochrome b (MT-CYB) from Naja kaouthia (Monocled cobra).